Consider the following 78-residue polypeptide: MSRVCQVTGKRPAVGNNRSHARNATKRRFLPNLQTHRFWVESEKRFVKLRLTAKGMRIIDKKGIDVVLADMRARGENV.

The tract at residues 1–25 (MSRVCQVTGKRPAVGNNRSHARNAT) is disordered.

It belongs to the bacterial ribosomal protein bL28 family.

This chain is Large ribosomal subunit protein bL28, found in Vibrio vulnificus (strain CMCP6).